Consider the following 88-residue polypeptide: Acyl-CoA-binding protein homolog (88 aa).

The 86-residue stretch at 3 to 88 (PQADFDKAAG…AHELIEKYGL (86 aa)) folds into the ACB domain. Residues Lys15, 30 to 34 (YGLYK), Lys52, Lys56, and Tyr75 each bind an acyl-CoA.

Belongs to the ACBP family. In terms of tissue distribution, brain. Is selectively expressed in glial cells.

The protein resides in the endoplasmic reticulum. The protein localises to the golgi apparatus. May play important functions in the control of brain and pituitary activities. May regulate GABA neurotransmission through a paracrine and/or autocrine mechanism. May not bind acyl-CoA esters. The chain is Acyl-CoA-binding protein homolog from Pelophylax ridibundus (Marsh frog).